Consider the following 554-residue polypeptide: Intraflagellar transport protein 56 (554 aa).

The interval Met1–Ile27 is disordered. Over residues Asp18–Ile27 the composition is skewed to basic residues. 4 TPR repeats span residues Glu57–Asn90, Glu92–Arg125, Lys151–Tyr184, and Ala468–Arg501.

It belongs to the IFT56 family. In terms of assembly, component of the IFT complex B. Interacts with IFT46; the interaction is direct.

The protein resides in the cell projection. It localises to the cilium. Functionally, component of the intraflagellar transport (IFT) complex B required for transport of proteins in the motile cilium. Required for transport of specific ciliary cargo proteins related to motility, while it is neither required for IFT complex B assembly or motion nor for cilium assembly. Required for efficient coupling between the accumulation of GLI2 and GLI3 at the ciliary tips and their dissociation from the negative regulator SUFU. Plays a key role in maintaining the integrity of the IFT complex B and the proper ciliary localization of the IFT complex B components. Not required for IFT complex A ciliary localization or function. Essential for maintaining proper microtubule organization within the ciliary axoneme. The chain is Intraflagellar transport protein 56 from Rattus norvegicus (Rat).